We begin with the raw amino-acid sequence, 734 residues long: Photosystem I P700 chlorophyll a apoprotein A2 (734 aa).

8 consecutive transmembrane segments (helical) span residues isoleucine 46 to alanine 69, leucine 135 to glutamine 158, leucine 175 to isoleucine 199, methionine 273 to tyrosine 291, isoleucine 330 to tyrosine 353, alanine 369 to isoleucine 395, alanine 417 to histidine 439, and phenylalanine 517 to valine 535. Cysteine 559 and cysteine 568 together coordinate [4Fe-4S] cluster. The next 2 membrane-spanning stretches (helical) occupy residues alanine 575–tryptophan 596 and leucine 643–isoleucine 665. 3 residues coordinate chlorophyll a: histidine 654, methionine 662, and tyrosine 670. Tryptophan 671 provides a ligand contact to phylloquinone. The chain crosses the membrane as a helical span at residues leucine 707 to alanine 727.

It belongs to the PsaA/PsaB family. The PsaA/B heterodimer binds the P700 chlorophyll special pair and subsequent electron acceptors. PSI consists of a core antenna complex that captures photons, and an electron transfer chain that converts photonic excitation into a charge separation. The eukaryotic PSI reaction center is composed of at least 11 subunits. P700 is a chlorophyll a/chlorophyll a' dimer, A0 is one or more chlorophyll a, A1 is one or both phylloquinones and FX is a shared 4Fe-4S iron-sulfur center. is required as a cofactor.

The protein localises to the plastid. Its subcellular location is the chloroplast thylakoid membrane. The enzyme catalyses reduced [plastocyanin] + hnu + oxidized [2Fe-2S]-[ferredoxin] = oxidized [plastocyanin] + reduced [2Fe-2S]-[ferredoxin]. PsaA and PsaB bind P700, the primary electron donor of photosystem I (PSI), as well as the electron acceptors A0, A1 and FX. PSI is a plastocyanin-ferredoxin oxidoreductase, converting photonic excitation into a charge separation, which transfers an electron from the donor P700 chlorophyll pair to the spectroscopically characterized acceptors A0, A1, FX, FA and FB in turn. Oxidized P700 is reduced on the lumenal side of the thylakoid membrane by plastocyanin. This chain is Photosystem I P700 chlorophyll a apoprotein A2, found in Crucihimalaya wallichii (Rock-cress).